A 247-amino-acid chain; its full sequence is NCT transcriptional regulatory complex subunit A (247 aa).

Residues 1 to 12 (MTDQDSTYRPRS) are compositionally biased toward basic and acidic residues. Disordered regions lie at residues 1-31 (MTDQ…SPIY), 48-82 (FFAP…SPDM), and 212-247 (VPDQ…DDSD). Over residues 13-22 (PDLSTFQSSI) the composition is skewed to polar residues.

It belongs to the NC2 alpha/DRAP1 family. As to quaternary structure, forms the NCT transcriptional regulatory complex with nctB and mot1.

Its subcellular location is the nucleus. Part of the NCT transcriptional regulatory complex that acts as a key regulator of ergosterol biosynthesis and the azole exporter cdr1B. The NCT complex binds the promoters of genes linked to azole susceptibility, and especially represses the expression of cdr1B transporter. This is NCT transcriptional regulatory complex subunit A from Aspergillus fumigatus (strain CBS 144.89 / FGSC A1163 / CEA10) (Neosartorya fumigata).